The primary structure comprises 699 residues: DNA ligase (699 aa).

The tract at residues 1 to 20 is disordered; that stretch reads MTVQKPIESLSPAQAKREHR. NAD(+) is bound by residues 43–47, 92–93, and glutamate 126; these read DAEYD and SL. Lysine 128 functions as the N6-AMP-lysine intermediate in the catalytic mechanism. NAD(+) is bound by residues arginine 149, glutamate 185, lysine 301, and lysine 325. The Zn(2+) site is built by cysteine 419, cysteine 422, cysteine 443, and cysteine 449. The 79-residue stretch at 621–699 folds into the BRCT domain; it reads AKESPVAGKT…EEDWLKLVGE (79 aa).

It belongs to the NAD-dependent DNA ligase family. LigA subfamily. Mg(2+) serves as cofactor. It depends on Mn(2+) as a cofactor.

The enzyme catalyses NAD(+) + (deoxyribonucleotide)n-3'-hydroxyl + 5'-phospho-(deoxyribonucleotide)m = (deoxyribonucleotide)n+m + AMP + beta-nicotinamide D-nucleotide.. In terms of biological role, DNA ligase that catalyzes the formation of phosphodiester linkages between 5'-phosphoryl and 3'-hydroxyl groups in double-stranded DNA using NAD as a coenzyme and as the energy source for the reaction. It is essential for DNA replication and repair of damaged DNA. This chain is DNA ligase, found in Beijerinckia indica subsp. indica (strain ATCC 9039 / DSM 1715 / NCIMB 8712).